The chain runs to 122 residues: Acidic phospholipase A2 (122 aa).

Cystine bridges form between C26–C115, C28–C44, C43–C95, C49–C122, C50–C88, C57–C81, and C75–C86. Ca(2+)-binding residues include Y27, G29, and G31. The active site involves H47. D48 serves as a coordination point for Ca(2+). D89 is an active-site residue.

Requires Ca(2+) as cofactor. Expressed by the venom gland.

It is found in the secreted. It catalyses the reaction a 1,2-diacyl-sn-glycero-3-phosphocholine + H2O = a 1-acyl-sn-glycero-3-phosphocholine + a fatty acid + H(+). In terms of biological role, PLA2 catalyzes the calcium-dependent hydrolysis of the 2-acyl groups in 3-sn-phosphoglycerides. The chain is Acidic phospholipase A2 from Lachesis stenophrys (Central American bushmaster).